A 138-amino-acid chain; its full sequence is MPTISQLINHGRSAKTSKSKAPALGMMFNSLQKKENKIPSPFKRGVCTRVATMTPKKPNSAIRKYARVRLSNGQEVTAYIPGEGHNLQEHSVVLIRGGKVKDLPGVRYTIVRGTQDAAGVDKRKQGRSIYGTKKPKEN.

The interval 1 to 20 is disordered; sequence MPTISQLINHGRSAKTSKSK. D102 is modified (3-methylthioaspartic acid). A disordered region spans residues 116–138; that stretch reads DAAGVDKRKQGRSIYGTKKPKEN.

It belongs to the universal ribosomal protein uS12 family. In terms of assembly, part of the 30S ribosomal subunit. Contacts proteins S8 and S17. May interact with IF1 in the 30S initiation complex.

Functionally, with S4 and S5 plays an important role in translational accuracy. Interacts with and stabilizes bases of the 16S rRNA that are involved in tRNA selection in the A site and with the mRNA backbone. Located at the interface of the 30S and 50S subunits, it traverses the body of the 30S subunit contacting proteins on the other side and probably holding the rRNA structure together. The combined cluster of proteins S8, S12 and S17 appears to hold together the shoulder and platform of the 30S subunit. This is Small ribosomal subunit protein uS12 from Metamycoplasma arthritidis (strain 158L3-1) (Mycoplasma arthritidis).